The chain runs to 229 residues: Large ribosomal subunit protein uL1 (229 aa).

The protein belongs to the universal ribosomal protein uL1 family. Part of the 50S ribosomal subunit.

In terms of biological role, binds directly to 23S rRNA. The L1 stalk is quite mobile in the ribosome, and is involved in E site tRNA release. Protein L1 is also a translational repressor protein, it controls the translation of the L11 operon by binding to its mRNA. In Histophilus somni (strain 2336) (Haemophilus somnus), this protein is Large ribosomal subunit protein uL1.